The chain runs to 545 residues: Prolyl 3-hydroxylase OGFOD1 (545 aa).

Residues 1–23 (MNGKRPADPGPARPMKKGKKQVS) are disordered. The Fe2OG dioxygenase domain maps to 137–239 (PTIDMSCAKY…RLSISGWFYG (103 aa)). 2 residues coordinate Fe cation: His155 and Asp157. Tyr169 provides a ligand contact to 2-oxoglutarate. His218 contacts Fe cation. Arg230 is a binding site for 2-oxoglutarate. Positions 371–380 (SEDDETEEKG) are enriched in acidic residues. A disordered region spans residues 371–437 (SEDDETEEKG…EAKKESSVPM (67 aa)). A compositionally biased stretch (low complexity) spans 383–393 (ETASAAAGTEE). Positions 402–417 (PENNQVAAGSHSQENG) are enriched in polar residues.

Belongs to the TPA1 family. As to quaternary structure, monomer. Fe(2+) serves as cofactor. Requires L-ascorbate as cofactor.

The protein resides in the cytoplasm. The protein localises to the nucleus. The enzyme catalyses [ribosomal protein uS12]-L-proline + 2-oxoglutarate + O2 = [ribosomal protein uS12]-(3S)-3-hydroxy-L-proline + succinate + CO2. Its function is as follows. Prolyl 3-hydroxylase that catalyzes 3-hydroxylation of 'Pro-62' of small ribosomal subunit uS12 (RPS23), thereby regulating protein translation termination efficiency. Involved in stress granule formation. This chain is Prolyl 3-hydroxylase OGFOD1 (Ogfod1), found in Mus musculus (Mouse).